The chain runs to 588 residues: 2-succinyl-5-enolpyruvyl-6-hydroxy-3-cyclohexene-1-carboxylate synthase (588 aa).

The disordered stretch occupies residues M1–S22.

The protein belongs to the TPP enzyme family. MenD subfamily. Homodimer. Mg(2+) is required as a cofactor. It depends on Mn(2+) as a cofactor. Thiamine diphosphate serves as cofactor.

The enzyme catalyses isochorismate + 2-oxoglutarate + H(+) = 5-enolpyruvoyl-6-hydroxy-2-succinyl-cyclohex-3-ene-1-carboxylate + CO2. It functions in the pathway quinol/quinone metabolism; 1,4-dihydroxy-2-naphthoate biosynthesis; 1,4-dihydroxy-2-naphthoate from chorismate: step 2/7. Its pathway is quinol/quinone metabolism; menaquinone biosynthesis. In terms of biological role, catalyzes the thiamine diphosphate-dependent decarboxylation of 2-oxoglutarate and the subsequent addition of the resulting succinic semialdehyde-thiamine pyrophosphate anion to isochorismate to yield 2-succinyl-5-enolpyruvyl-6-hydroxy-3-cyclohexene-1-carboxylate (SEPHCHC). The chain is 2-succinyl-5-enolpyruvyl-6-hydroxy-3-cyclohexene-1-carboxylate synthase from Clavibacter michiganensis subsp. michiganensis (strain NCPPB 382).